Reading from the N-terminus, the 356-residue chain is Phosphoribosylformylglycinamidine cyclo-ligase (356 aa).

Belongs to the AIR synthase family.

It is found in the cytoplasm. The enzyme catalyses 2-formamido-N(1)-(5-O-phospho-beta-D-ribosyl)acetamidine + ATP = 5-amino-1-(5-phospho-beta-D-ribosyl)imidazole + ADP + phosphate + H(+). The protein operates within purine metabolism; IMP biosynthesis via de novo pathway; 5-amino-1-(5-phospho-D-ribosyl)imidazole from N(2)-formyl-N(1)-(5-phospho-D-ribosyl)glycinamide: step 2/2. The sequence is that of Phosphoribosylformylglycinamidine cyclo-ligase from Rhizobium meliloti (strain 1021) (Ensifer meliloti).